The following is a 263-amino-acid chain: Thiazole synthase (263 aa).

Lys102 (schiff-base intermediate with DXP) is an active-site residue. Residues Gly164, 190 to 191 (AG), and 212 to 213 (NT) contribute to the 1-deoxy-D-xylulose 5-phosphate site.

Belongs to the ThiG family. Homotetramer. Forms heterodimers with either ThiH or ThiS.

Its subcellular location is the cytoplasm. The catalysed reaction is [ThiS sulfur-carrier protein]-C-terminal-Gly-aminoethanethioate + 2-iminoacetate + 1-deoxy-D-xylulose 5-phosphate = [ThiS sulfur-carrier protein]-C-terminal Gly-Gly + 2-[(2R,5Z)-2-carboxy-4-methylthiazol-5(2H)-ylidene]ethyl phosphate + 2 H2O + H(+). Its pathway is cofactor biosynthesis; thiamine diphosphate biosynthesis. Functionally, catalyzes the rearrangement of 1-deoxy-D-xylulose 5-phosphate (DXP) to produce the thiazole phosphate moiety of thiamine. Sulfur is provided by the thiocarboxylate moiety of the carrier protein ThiS. In vitro, sulfur can be provided by H(2)S. This chain is Thiazole synthase, found in Helicobacter hepaticus (strain ATCC 51449 / 3B1).